Consider the following 405-residue polypeptide: Tryptophan synthase beta chain (405 aa).

Residue Lys-98 is modified to N6-(pyridoxal phosphate)lysine.

This sequence belongs to the TrpB family. As to quaternary structure, tetramer of two alpha and two beta chains. Pyridoxal 5'-phosphate is required as a cofactor.

The catalysed reaction is (1S,2R)-1-C-(indol-3-yl)glycerol 3-phosphate + L-serine = D-glyceraldehyde 3-phosphate + L-tryptophan + H2O. The protein operates within amino-acid biosynthesis; L-tryptophan biosynthesis; L-tryptophan from chorismate: step 5/5. Its function is as follows. The beta subunit is responsible for the synthesis of L-tryptophan from indole and L-serine. The sequence is that of Tryptophan synthase beta chain from Xanthomonas campestris pv. campestris (strain 8004).